Consider the following 75-residue polypeptide: Protein SlyX homolog (75 aa).

It belongs to the SlyX family.

This Vibrio campbellii (strain ATCC BAA-1116) protein is Protein SlyX homolog.